Here is a 78-residue protein sequence, read N- to C-terminus: uncharacterized protein (78 aa).

The first 45 residues, 1 to 45, serve as a signal peptide directing secretion; it reads MPVIAIIAIVIIVIILNKTGVSDSLTALTLATVAALLTGGGAAGA.

The protein to E.coli YkfL.

This is an uncharacterized protein from Escherichia coli (strain K12).